Here is a 404-residue protein sequence, read N- to C-terminus: Nicotinate phosphoribosyltransferase (404 aa).

Histidine 225 carries the post-translational modification Phosphohistidine; by autocatalysis.

This sequence belongs to the NAPRTase family. Transiently phosphorylated on a His residue during the reaction cycle. Phosphorylation strongly increases the affinity for substrates and increases the rate of nicotinate D-ribonucleotide production. Dephosphorylation regenerates the low-affinity form of the enzyme, leading to product release.

It catalyses the reaction nicotinate + 5-phospho-alpha-D-ribose 1-diphosphate + ATP + H2O = nicotinate beta-D-ribonucleotide + ADP + phosphate + diphosphate. The protein operates within cofactor biosynthesis; NAD(+) biosynthesis; nicotinate D-ribonucleotide from nicotinate: step 1/1. Functionally, catalyzes the synthesis of beta-nicotinate D-ribonucleotide from nicotinate and 5-phospho-D-ribose 1-phosphate at the expense of ATP. The protein is Nicotinate phosphoribosyltransferase of Methanosarcina acetivorans (strain ATCC 35395 / DSM 2834 / JCM 12185 / C2A).